Reading from the N-terminus, the 372-residue chain is Putative aminopeptidase SgcX (372 aa).

Residues histidine 67 and aspartate 180 each coordinate a divalent metal cation. Glutamate 212 serves as the catalytic Proton acceptor. The a divalent metal cation site is built by glutamate 213, aspartate 235, and histidine 329.

It belongs to the peptidase M42 family. The cofactor is a divalent metal cation.

This chain is Putative aminopeptidase SgcX (sgcX), found in Salmonella typhimurium (strain LT2 / SGSC1412 / ATCC 700720).